We begin with the raw amino-acid sequence, 274 residues long: Large ribosomal subunit protein uL2cz/uL2cy (274 aa).

2 disordered regions span residues 1–23 (MAIH…SKVK) and 224–274 (NPVD…RRSK).

It belongs to the universal ribosomal protein uL2 family. Part of the 50S ribosomal subunit.

The protein localises to the plastid. Its subcellular location is the chloroplast. This Lactuca sativa (Garden lettuce) protein is Large ribosomal subunit protein uL2cz/uL2cy (rpl2-A).